We begin with the raw amino-acid sequence, 278 residues long: HTH-type transcriptional activator RhaS (278 aa).

Residues 174 to 272 (NLLLAWLEDH…NWSPRDIRQG (99 aa)) enclose the HTH araC/xylS-type domain. DNA-binding regions (H-T-H motif) lie at residues 191-212 (DAVA…KQQT) and 239-262 (VTDI…RREF).

In terms of assembly, binds DNA as a dimer.

It is found in the cytoplasm. In terms of biological role, activates expression of the rhaBAD and rhaT operons. This chain is HTH-type transcriptional activator RhaS, found in Escherichia coli O6:H1 (strain CFT073 / ATCC 700928 / UPEC).